The primary structure comprises 185 residues: Ribosome-recycling factor (185 aa).

It belongs to the RRF family.

Its subcellular location is the cytoplasm. Functionally, responsible for the release of ribosomes from messenger RNA at the termination of protein biosynthesis. May increase the efficiency of translation by recycling ribosomes from one round of translation to another. In Parafrankia sp. (strain EAN1pec), this protein is Ribosome-recycling factor.